Consider the following 55-residue polypeptide: Neurotoxin BmKX-A1-S31 (55 aa).

A signal peptide spans 1–23 (MKIFFAVLVILVLFSMLIWTAYG). 3 disulfide bridges follow: Cys-30–Cys-45, Cys-36–Cys-50, and Cys-39–Cys-53.

Expressed by the venom gland.

Its subcellular location is the secreted. The sequence is that of Neurotoxin BmKX-A1-S31 from Olivierus martensii (Manchurian scorpion).